The chain runs to 1335 residues: Regulatory-associated protein of mTOR (1335 aa).

Phosphoserine is present on residues Ser44 and Ser122. Position 696 is a phosphoserine; by MAPK8 (Ser696). The O-linked (GlcNAc) threonine glycan is linked to Thr700. Phosphothreonine; by MAPK8 is present on Thr706. Ser719 and Ser721 each carry phosphoserine; by RPS6KA1. Phosphoserine; by AMPK and RPS6KA1 is present on Ser722. Residue Ser738 is modified to Phosphoserine. The residue at position 791 (Ser791) is a Phosphoserine; by PKA. A Phosphoserine; by AMPK modification is found at Ser792. Phosphoserine is present on residues Ser836 and Ser855. A disordered region spans residues 850–943; the sequence is VLDTSSLTQS…PEQTADDADD (94 aa). Residues 851-866 are compositionally biased toward polar residues; the sequence is LDTSSLTQSAPASPTN. Ser859 carries the phosphoserine; by MTOR modification. Ser863 carries the post-translational modification Phosphoserine; by MAPK8, MTOR and NLK. At Thr865 the chain carries Phosphothreonine. A compositionally biased stretch (low complexity) spans 874-887; sequence AGGSPPASSTSSSS. A Phosphoserine; by TBK1 modification is found at Ser877. Glycyl lysine isopeptide (Lys-Gly) (interchain with G-Cter in ubiquitin) cross-links involve residues Lys932 and Lys948. At Ser982 the chain carries Phosphoserine. 7 WD repeats span residues 1020-1061, 1065-1106, 1121-1160, 1164-1203, 1209-1249, 1251-1291, and 1299-1335; these read NRNP…DYFH, PRYT…EKNP, TTRGAGMVVDWEQETGLLMSSGDVRIVRIWDTDREMKVQD, GADSCVTSLSCDSHRSLIVAGLGDGSIRVYDRRMALSECR, EHTA…SVNV, QIVK…NNIK, and QRVGAISCLAFHPHWPHLAVGSNDYYISVYSVEKRVR. Lys1097 carries the post-translational modification N6-acetyllysine.

The protein belongs to the WD repeat RAPTOR family. As to quaternary structure, part of the mechanistic target of rapamycin complex 1 (mTORC1) which contains MTOR, MLST8 and RPTOR. mTORC1 associates with AKT1S1/PRAS40, which inhibits its activity. mTORC1 associates with DEPTOR, which regulates its activity. mTORC1 binds to and is inhibited by FKBP12-rapamycin. Forms a complex with MTOR under both leucine-rich and -poor conditions. Interacts with (via TOS motifs) EIF4EBP1 and RPS6KB1; interaction is independent of its association with MTOR. Binds preferentially to poorly or non-phosphorylated forms of EIF4EBP1, and this binding is critical to the ability of MTOR to catalyze phosphorylation. Interacts with ULK1 in a nutrient-dependent manner; the interaction is reduced during starvation. Interacts with GTP-bound form of RagA/RRAGA or RagB/RRAGB and GDP-bound form of RagC/RRAGC or RagD/RRAGD, promoting recruitment of mTORC1 to the lysosomes. Interacts (when phosphorylated by AMPK) with 14-3-3 protein, leading to inhibition of its activity. Interacts with SPAG5; SPAG5 competes with MTOR for RPTOR-binding, resulting in decreased mTORC1 formation. Interacts with WAC; WAC positively regulates MTOR activity by promoting the assembly of the TTT complex composed of TELO2, TTI1 and TTI2 and the RUVBL complex composed of RUVBL1 and RUVBL2 into the TTT-RUVBL complex which leads to the dimerization of the mTORC1 complex and its subsequent activation. Interacts with G3BP1. The complex formed with G3BP1 and SPAG5 is increased by oxidative stress. Interacts with HTR6. Interacts with PIH1D1. Interacts with LARP1. Interacts with BRAT1. Interacts with SIK3. Interacts with SLC38A7; this interaction mediates the recruitment of mTORC1 to the lysosome and its subsequent activation. (Microbial infection) Interacts with vaccinia virus protein F17; this interaction dysregulates mTOR. Insulin-stimulated phosphorylation at Ser-863 by MTOR and MAPK8 regulates mTORC1 activity. Phosphorylated at Ser-863 by NLK in response to stress, disrupting the interaction with small GTPases Rag (RagA/RRAGA, RagB/RRAGB, RagC/RRAGC and/or RagD/RRAGD), thereby preventing lysosome recruitment and activation of the mTORC1 complex. Osmotic stress also induces phosphorylation at Ser-696, Thr-706 and Ser-863 by MAPK8. Ser-863 phosphorylation is required for phosphorylation at Ser-855 and Ser-859. In response to nutrient limitation, phosphorylated at Ser-722 and Ser-792 by AMPK; phosphorylation promotes interaction with 14-3-3 proteins, leading to negative regulation of the mTORC1 complex. Phosphorylation at Ser-722 and Ser-792 by AMPK in response to glucose starvation inhibits O-GlcNAcylation by OGT and subsequent activation of mTORC1. In response to growth factors, phosphorylated at Ser-719, Ser-721 and Ser-722 by RPS6KA1, which stimulates mTORC1 activity. Phosphorylation at Ser-791 by PKA downstream of cAMP inhibits the mTORC1 complex. Phosphorylated at Ser-877 by TBK1, leading to negative regulation of the mTORC1 complex. Post-translationally, O-GlcNAcylated by OGT upon glucose sufficiency, promoting interaction with small GTPases Rag (RagA/RRAGA, RagB/RRAGB, RagC/RRAGC and/or RagD/RRAGD) and subsequent recruitment of mTORC1 to lysosomal membranes, leading to activation of the mTORC1 complex. Phosphorylation at Ser-722 and Ser-792 by AMPK in response to glucose starvation inhibits O-GlcNAcylation. In terms of processing, acetylation at Lys-1097 by EP300/p300 in response to leucine metabolite acetyl-coA promotes its activity, leading to activation of the mTORC1 complex. Acetylation is decreased in response to fasting. Ubiquitinated, leading to its degradation by the proteasome. Deubiquitinated by OTUB1 via a non-catalytic mechanism. Ubiquitinated by an E3 ubiquitin ligase complex containing VHL. In terms of tissue distribution, highly expressed in skeletal muscle, and in a lesser extent in brain, lung, small intestine, kidney and placenta. As to expression, widely expressed, with highest levels in nasal mucosa and pituitary and lowest in spleen.

It localises to the lysosome membrane. Its subcellular location is the cytoplasm. The protein resides in the cytoplasmic granule. Its function is as follows. Component of the mechanistic target of rapamycin complex 1 (mTORC1), an evolutionarily conserved central nutrient sensor that stimulates anabolic reactions and macromolecule biosynthesis to promote cellular biomass generation and growth. In response to nutrients, growth factors or amino acids, mTORC1 is recruited to the lysosome membrane and promotes protein, lipid and nucleotide synthesis by phosphorylating several substrates, such as ribosomal protein S6 kinase (RPS6KB1 and RPS6KB2) and EIF4EBP1 (4E-BP1). In the same time, it inhibits catabolic pathways by phosphorylating the autophagy initiation components ULK1 and ATG13, as well as transcription factor TFEB, a master regulators of lysosomal biogenesis and autophagy. The mTORC1 complex is inhibited in response to starvation and amino acid depletion. Within the mTORC1 complex, RPTOR acts both as a molecular adapter, which (1) mediates recruitment of mTORC1 to lysosomal membranes via interaction with small GTPases Rag (RagA/RRAGA, RagB/RRAGB, RagC/RRAGC and/or RagD/RRAGD), and a (2) substrate-specific adapter, which promotes substrate specificity by binding to TOS motif-containing proteins and direct them towards the active site of the MTOR kinase domain for phosphorylation. mTORC1 complex regulates many cellular processes, such as odontoblast and osteoclast differentiation or neuronal transmission. mTORC1 complex in excitatory neuronal transmission is required for the prosocial behavior induced by the psychoactive substance lysergic acid diethylamide (LSD). In Homo sapiens (Human), this protein is Regulatory-associated protein of mTOR.